Consider the following 159-residue polypeptide: Ribosomal RNA large subunit methyltransferase H (159 aa).

S-adenosyl-L-methionine contacts are provided by residues leucine 76, glycine 108, and 127-132 (FSKMTF).

The protein belongs to the RNA methyltransferase RlmH family. Homodimer.

The protein resides in the cytoplasm. The enzyme catalyses pseudouridine(1915) in 23S rRNA + S-adenosyl-L-methionine = N(3)-methylpseudouridine(1915) in 23S rRNA + S-adenosyl-L-homocysteine + H(+). In terms of biological role, specifically methylates the pseudouridine at position 1915 (m3Psi1915) in 23S rRNA. In Lachnoclostridium phytofermentans (strain ATCC 700394 / DSM 18823 / ISDg) (Clostridium phytofermentans), this protein is Ribosomal RNA large subunit methyltransferase H.